The following is a 388-amino-acid chain: Probable serine/threonine-protein kinase PBL20 (388 aa).

Cys-3 carries the S-palmitoyl cysteine lipid modification. Positions 91-372 (FSRKLKIGEG…FVVESLTNII (282 aa)) constitute a Protein kinase domain. ATP contacts are provided by residues 97-105 (IGEGGFGSV) and Lys-128. The active-site Proton acceptor is the Asp-221.

It belongs to the protein kinase superfamily. Ser/Thr protein kinase family.

The protein localises to the cell membrane. It catalyses the reaction L-seryl-[protein] + ATP = O-phospho-L-seryl-[protein] + ADP + H(+). The catalysed reaction is L-threonyl-[protein] + ATP = O-phospho-L-threonyl-[protein] + ADP + H(+). In terms of biological role, may be involved in plant defense signaling. The sequence is that of Probable serine/threonine-protein kinase PBL20 from Arabidopsis thaliana (Mouse-ear cress).